Reading from the N-terminus, the 116-residue chain is MTNHKLIEAVTKSQLRTDLPSFRPGDTLRVHVRIIEGTRERIQVFEGVVIKRRGGGVSETFTVRKISSGVGVERTFPLHTPKIEKIEVKRRGKVRRAKLYYLRSLRGKAARIQEIR.

This sequence belongs to the bacterial ribosomal protein bL19 family.

Its function is as follows. This protein is located at the 30S-50S ribosomal subunit interface and may play a role in the structure and function of the aminoacyl-tRNA binding site. The sequence is that of Large ribosomal subunit protein bL19 from Staphylococcus aureus (strain USA300).